The primary structure comprises 55 residues: Large ribosomal subunit protein bL33 (55 aa).

It belongs to the bacterial ribosomal protein bL33 family.

This chain is Large ribosomal subunit protein bL33, found in Photorhabdus laumondii subsp. laumondii (strain DSM 15139 / CIP 105565 / TT01) (Photorhabdus luminescens subsp. laumondii).